A 529-amino-acid polypeptide reads, in one-letter code: Zinc finger protein 490 (529 aa).

The interval 1–53 (MRRNSSLSFQMERPLEEQVQSKWSSSQGRTGTGGSDVLQMQNSEHHGQSIKTQ) is disordered. Residues 57–132 (ISLEDVAVNF…ALCENKEDCP (76 aa)) form the KRAB domain. C2H2-type zinc fingers lie at residues 156–178 (CDCSVCGEVFMHQVSLNRHMRSH), 194–216 (HKCKECGKTFTRSSSIRTHERIH), 222–244 (YECKECGKAFAFLFSFRNHIRIH), 250–272 (YECKECGKAFRYLTALRRHEKNH), 278–300 (YKCKQCGKAFIYYQPFLTHERTH), 306–328 (YECKQCGKAFSCPTYLRSHEKTH), 334–356 (FVCRECGRAFFSHSSLRKHVKTH), 362–384 (YTCKKCGEAFKSSSSCEVHERTH), 390–412 (YECKQCGKAFNSSSYLQLHERVH), 418–440 (YECKECGKAFLYSTHFRIHERTH), 446–468 (YECKQCGRVFIYFSHLRRHERSH), 474–496 (CECKQCGKAFTCLNSLKVHKRIH), and 502–524 (FQCRQCGKAFSYSKSLHVHERTH).

This sequence belongs to the krueppel C2H2-type zinc-finger protein family.

The protein localises to the nucleus. Functionally, may be involved in transcriptional regulation. The protein is Zinc finger protein 490 (ZNF490) of Homo sapiens (Human).